The chain runs to 69 residues: U2-agatoxin-Ao1o (69 aa).

Residues 1-20 (MKAIISLLLISAMVFSMFEA) form the signal peptide. The propeptide occupies 21-34 (VPVRRRFTAFEGER). Disulfide bonds link cysteine 36-cysteine 52, cysteine 43-cysteine 57, and cysteine 51-cysteine 67. Leucine 68 is subject to Leucine amide.

It belongs to the neurotoxin 01 (U2-agtx) family. In terms of tissue distribution, expressed by the venom gland.

It is found in the secreted. In terms of biological role, insect active toxin causing rapid but reversible paralysis in crickets. No activity shown in mammals. Does not show effect on mammalian voltage-gated calcium channels. In Agelena orientalis (Funnel-web spider), this protein is U2-agatoxin-Ao1o.